We begin with the raw amino-acid sequence, 333 residues long: Holliday junction branch migration complex subunit RuvB (333 aa).

The tract at residues 1-182 is large ATPase domain (RuvB-L); it reads MDERLLSGES…FGVLSRLEYY (182 aa). ATP contacts are provided by residues Leu21, Arg22, Gly63, Lys66, Thr67, Thr68, 129–131, Arg172, Tyr182, and Arg219; that span reads EDF. Thr67 is a Mg(2+) binding site. Positions 183–253 are small ATPAse domain (RuvB-S); that stretch reads TVDQLSAIVE…ITQMALELLQ (71 aa). The tract at residues 256–333 is head domain (RuvB-H); the sequence is KLGLDHIDHK…EHFGMEMPKV (78 aa). Positions 311 and 316 each coordinate DNA.

The protein belongs to the RuvB family. Homohexamer. Forms an RuvA(8)-RuvB(12)-Holliday junction (HJ) complex. HJ DNA is sandwiched between 2 RuvA tetramers; dsDNA enters through RuvA and exits via RuvB. An RuvB hexamer assembles on each DNA strand where it exits the tetramer. Each RuvB hexamer is contacted by two RuvA subunits (via domain III) on 2 adjacent RuvB subunits; this complex drives branch migration. In the full resolvosome a probable DNA-RuvA(4)-RuvB(12)-RuvC(2) complex forms which resolves the HJ.

Its subcellular location is the cytoplasm. The catalysed reaction is ATP + H2O = ADP + phosphate + H(+). In terms of biological role, the RuvA-RuvB-RuvC complex processes Holliday junction (HJ) DNA during genetic recombination and DNA repair, while the RuvA-RuvB complex plays an important role in the rescue of blocked DNA replication forks via replication fork reversal (RFR). RuvA specifically binds to HJ cruciform DNA, conferring on it an open structure. The RuvB hexamer acts as an ATP-dependent pump, pulling dsDNA into and through the RuvAB complex. RuvB forms 2 homohexamers on either side of HJ DNA bound by 1 or 2 RuvA tetramers; 4 subunits per hexamer contact DNA at a time. Coordinated motions by a converter formed by DNA-disengaged RuvB subunits stimulates ATP hydrolysis and nucleotide exchange. Immobilization of the converter enables RuvB to convert the ATP-contained energy into a lever motion, pulling 2 nucleotides of DNA out of the RuvA tetramer per ATP hydrolyzed, thus driving DNA branch migration. The RuvB motors rotate together with the DNA substrate, which together with the progressing nucleotide cycle form the mechanistic basis for DNA recombination by continuous HJ branch migration. Branch migration allows RuvC to scan DNA until it finds its consensus sequence, where it cleaves and resolves cruciform DNA. This Bacillus anthracis (strain A0248) protein is Holliday junction branch migration complex subunit RuvB.